The primary structure comprises 621 residues: Nitrate reductase [NADH] 1 (621 aa).

The Cytochrome b5 heme-binding domain maps to 249 to 324 (GKEFTMSEVR…LDTYRIGELI (76 aa)). Heme contacts are provided by His284 and His307. Positions 361-473 (REKIHCRLVG…KGPLGHVEYT (113 aa)) constitute an FAD-binding FR-type domain. Residues 413-416 (RAYT), 430-432 (LVK), Phe435, 447-449 (LMT), Ser497, and Thr500 contribute to the FAD site.

It belongs to the nitrate reductase family. As to quaternary structure, homodimer. FAD is required as a cofactor. It depends on heme as a cofactor. Mo-molybdopterin serves as cofactor.

It carries out the reaction nitrite + NAD(+) + H2O = nitrate + NADH + H(+). Functionally, nitrate reductase is a key enzyme involved in the first step of nitrate assimilation in plants, fungi and bacteria. The sequence is that of Nitrate reductase [NADH] 1 from Zea mays (Maize).